The following is a 300-amino-acid chain: Peptidyl-prolyl cis-trans isomerase E (300 aa).

An RRM domain is found at 6–84 (RTIYVGGLAD…RTIRVNLAKP (79 aa)). The 157-residue stretch at 142 to 298 (FFDIRIGGND…QKIVIYSCGE (157 aa)) folds into the PPIase cyclophilin-type domain.

This sequence belongs to the cyclophilin-type PPIase family. PPIase E subfamily.

Its subcellular location is the nucleus. The catalysed reaction is [protein]-peptidylproline (omega=180) = [protein]-peptidylproline (omega=0). PPIases accelerate the folding of proteins. It catalyzes the cis-trans isomerization of proline imidic peptide bonds in oligopeptides. Combines RNA-binding and PPIase activities. This is Peptidyl-prolyl cis-trans isomerase E (cyp33) from Drosophila melanogaster (Fruit fly).